Reading from the N-terminus, the 121-residue chain is MQIKNFPFLFLLNSLIIFSCSTIASLPEEPSSPQESTLKALSLYEAHLSSYIMYLQTFLVKTKQKVNNKNYPEFTLFDTSKLKKDQTLKSIKTNIAALKNHIDKIKPIAMQIYKKYSKNIP.

The N-terminal stretch at 1-19 (MQIKNFPFLFLLNSLIIFS) is a signal peptide. Cys-20 carries N-palmitoyl cysteine lipidation. Cys-20 is lipidated: S-diacylglycerol cysteine.

It is found in the cell outer membrane. Functionally, outer membrane lipoprotein that could act as a component of a potential toxin-antitoxin system in B.burgdorferi which could serve as a plasmid stabilization mechanism in a growing bacterial population. The polypeptide is Outer membrane lipoprotein BBA14 (Borreliella burgdorferi (strain ATCC 35210 / DSM 4680 / CIP 102532 / B31) (Borrelia burgdorferi)).